The primary structure comprises 167 residues: Large ribosomal subunit protein uL10 (167 aa).

This sequence belongs to the universal ribosomal protein uL10 family. Part of the ribosomal stalk of the 50S ribosomal subunit. The N-terminus interacts with L11 and the large rRNA to form the base of the stalk. The C-terminus forms an elongated spine to which L12 dimers bind in a sequential fashion forming a multimeric L10(L12)X complex.

Its function is as follows. Forms part of the ribosomal stalk, playing a central role in the interaction of the ribosome with GTP-bound translation factors. The chain is Large ribosomal subunit protein uL10 from Streptococcus mutans serotype c (strain ATCC 700610 / UA159).